The sequence spans 559 residues: Glucose-6-phosphate isomerase 4 (559 aa).

Glu356 (proton donor) is an active-site residue. Catalysis depends on residues His387 and Lys513.

This sequence belongs to the GPI family.

It localises to the cytoplasm. The enzyme catalyses alpha-D-glucose 6-phosphate = beta-D-fructose 6-phosphate. The protein operates within carbohydrate biosynthesis; gluconeogenesis. It participates in carbohydrate degradation; glycolysis; D-glyceraldehyde 3-phosphate and glycerone phosphate from D-glucose: step 2/4. Functionally, catalyzes the reversible isomerization of glucose-6-phosphate to fructose-6-phosphate. In Rhodococcus jostii (strain RHA1), this protein is Glucose-6-phosphate isomerase 4.